The primary structure comprises 202 residues: MKALTTRQKEVFDLIRDHITQTGMPPTRAEIASRLGFRSPNAAEEHLKALARKGAIEIVSGASRGIRLMIEEESGLPLIGRVAAGEPLLATQHIESHYQVDPALFKPHADFLLRVSGMSMKDIGIMDGDLLAVHKTQDACNGQVVVARIDDDVTVKRLKRQGNIVELLPENSEFDPIVVDLRQQELTIEGLAVGVIRNGNWL.

The segment at residues 28 to 48 (RAEIASRLGFRSPNAAEEHLK) is a DNA-binding region (H-T-H motif). Residues serine 119 and lysine 156 each act as for autocatalytic cleavage activity in the active site.

It belongs to the peptidase S24 family. In terms of assembly, homodimer.

The enzyme catalyses Hydrolysis of Ala-|-Gly bond in repressor LexA.. Functionally, represses a number of genes involved in the response to DNA damage (SOS response), including recA and lexA. Binds to the 16 bp palindromic sequence 5'-CTGTATATATATACAG-3'. In the presence of single-stranded DNA, RecA interacts with LexA causing an autocatalytic cleavage which disrupts the DNA-binding part of LexA, leading to derepression of the SOS regulon and eventually DNA repair. In Sodalis glossinidius (strain morsitans), this protein is LexA repressor.